Consider the following 445-residue polypeptide: Fasciclin-like arabinogalactan protein 16 (445 aa).

Positions 1–23 (MDSSYGATKFLLLLFLTTSIATA) are cleaved as a signal peptide. FAS1 domains follow at residues 35-173 (NSNS…ERLL) and 257-400 (VKDF…DGVL). 2 N-linked (GlcNAc...) asparagine glycosylation sites follow: Asn-72 and Asn-279.

Belongs to the fasciclin-like AGP family.

The protein resides in the secreted. May be a cell surface adhesion protein. This Arabidopsis thaliana (Mouse-ear cress) protein is Fasciclin-like arabinogalactan protein 16 (FLA16).